Reading from the N-terminus, the 724-residue chain is Phosphoribosylformylglycinamidine synthase subunit PurL (724 aa).

The active site involves His46. Positions 49 and 88 each coordinate ATP. Glu90 is a binding site for Mg(2+). Substrate contacts are provided by residues 91–94 (SHNH) and Arg113. The Proton acceptor role is filled by His92. Asp114 provides a ligand contact to Mg(2+). Gln237 is a substrate binding site. Asp265 contributes to the Mg(2+) binding site. A substrate-binding site is contributed by 309–311 (ESQ). ATP contacts are provided by Asp489 and Gly526. Asn527 provides a ligand contact to Mg(2+). Ser529 contacts substrate.

Belongs to the FGAMS family. Monomer. Part of the FGAM synthase complex composed of 1 PurL, 1 PurQ and 2 PurS subunits.

Its subcellular location is the cytoplasm. It carries out the reaction N(2)-formyl-N(1)-(5-phospho-beta-D-ribosyl)glycinamide + L-glutamine + ATP + H2O = 2-formamido-N(1)-(5-O-phospho-beta-D-ribosyl)acetamidine + L-glutamate + ADP + phosphate + H(+). The protein operates within purine metabolism; IMP biosynthesis via de novo pathway; 5-amino-1-(5-phospho-D-ribosyl)imidazole from N(2)-formyl-N(1)-(5-phospho-D-ribosyl)glycinamide: step 1/2. In terms of biological role, part of the phosphoribosylformylglycinamidine synthase complex involved in the purines biosynthetic pathway. Catalyzes the ATP-dependent conversion of formylglycinamide ribonucleotide (FGAR) and glutamine to yield formylglycinamidine ribonucleotide (FGAM) and glutamate. The FGAM synthase complex is composed of three subunits. PurQ produces an ammonia molecule by converting glutamine to glutamate. PurL transfers the ammonia molecule to FGAR to form FGAM in an ATP-dependent manner. PurS interacts with PurQ and PurL and is thought to assist in the transfer of the ammonia molecule from PurQ to PurL. The protein is Phosphoribosylformylglycinamidine synthase subunit PurL of Granulibacter bethesdensis (strain ATCC BAA-1260 / CGDNIH1).